We begin with the raw amino-acid sequence, 245 residues long: MKVDLNADLGEGCVHDRALLRLVSSANIACGFHAGDAQTMLQSVRWALESNVAIGAHPGFADRENFGRSPRHLPSETLYAQVVYQVGALKALAEGEGGKLVHVKPHGALYNQAAKDPALADAIALAVRAVDPALILVGLANSESIRAGERHGLTTRQEVFADRAYQSDGSLVARGQPGALVESDEQAIRQTLTMVQKGQVQSLSGEWVKVQADSICLHGDGPHALDFAHRLRQAFSLQGIDVSSS.

Belongs to the LamB/PxpA family. In terms of assembly, forms a complex composed of PxpA, PxpB and PxpC.

The catalysed reaction is 5-oxo-L-proline + ATP + 2 H2O = L-glutamate + ADP + phosphate + H(+). Its function is as follows. Catalyzes the cleavage of 5-oxoproline to form L-glutamate coupled to the hydrolysis of ATP to ADP and inorganic phosphate. In Erwinia tasmaniensis (strain DSM 17950 / CFBP 7177 / CIP 109463 / NCPPB 4357 / Et1/99), this protein is 5-oxoprolinase subunit A.